A 316-amino-acid chain; its full sequence is Porphobilinogen deaminase (316 aa).

Cysteine 245 is modified (S-(dipyrrolylmethanemethyl)cysteine).

Belongs to the HMBS family. As to quaternary structure, monomer. The cofactor is dipyrromethane.

The enzyme catalyses 4 porphobilinogen + H2O = hydroxymethylbilane + 4 NH4(+). It participates in porphyrin-containing compound metabolism; protoporphyrin-IX biosynthesis; coproporphyrinogen-III from 5-aminolevulinate: step 2/4. Its pathway is porphyrin-containing compound metabolism; chlorophyll biosynthesis. Functionally, tetrapolymerization of the monopyrrole PBG into the hydroxymethylbilane pre-uroporphyrinogen in several discrete steps. The polypeptide is Porphobilinogen deaminase (Prochlorococcus marinus (strain AS9601)).